A 102-amino-acid polypeptide reads, in one-letter code: Putative ribosomal protein uL13-like (102 aa).

Belongs to the universal ribosomal protein uL13 family.

This Homo sapiens (Human) protein is Putative ribosomal protein uL13-like (RPL13AP3).